The sequence spans 95 residues: Protein NCBP2AS2 homolog (95 aa).

The chain is Protein NCBP2AS2 homolog from Ixodes scapularis (Black-legged tick).